We begin with the raw amino-acid sequence, 236 residues long: MSQDWKEYAKRVLDEWQPRTKLGMLVKEGQITDIHEIFRRGYQIKEPEIIDVLLPEVNARENQEIIDIALTVRMTDSGRRVRFRVLAAVGNRDGYVGLGIGHGREVGIAIRKAINYAKLNIIEIKRGCGSWECRCRRPHSVPFAVEGKEGSVRVRLIPGPRGLGLVIGDVGKKILRLAGIQDVWSQTFGETRTTVNFAKAVFNALYNTNRVVVTPEMIERYGIVVGRAMPTSFTLE.

Residues 61-124 form the S5 DRBM domain; sequence ENQEIIDIAL…NYAKLNIIEI (64 aa).

This sequence belongs to the universal ribosomal protein uS5 family. In terms of assembly, part of the 30S ribosomal subunit. Contacts protein S4.

With S4 and S12 plays an important role in translational accuracy. The protein is Small ribosomal subunit protein uS5 of Pyrococcus horikoshii (strain ATCC 700860 / DSM 12428 / JCM 9974 / NBRC 100139 / OT-3).